A 1578-amino-acid chain; its full sequence is DNA-directed RNA polymerase subunit beta' (1578 aa).

Zn(2+) contacts are provided by Cys101, Cys103, Cys115, and Cys118. 3 residues coordinate Mg(2+): Asp1286, Asp1288, and Asp1290.

Belongs to the RNA polymerase beta' chain family. RpoC1 subfamily. In terms of assembly, in plastids the minimal PEP RNA polymerase catalytic core is composed of four subunits: alpha, beta, beta', and beta''. When a (nuclear-encoded) sigma factor is associated with the core the holoenzyme is formed, which can initiate transcription. Requires Mg(2+) as cofactor. Zn(2+) is required as a cofactor.

It is found in the plastid. It localises to the chloroplast. The enzyme catalyses RNA(n) + a ribonucleoside 5'-triphosphate = RNA(n+1) + diphosphate. DNA-dependent RNA polymerase catalyzes the transcription of DNA into RNA using the four ribonucleoside triphosphates as substrates. The protein is DNA-directed RNA polymerase subunit beta' of Tupiella akineta (Green alga).